Consider the following 316-residue polypeptide: HPr kinase/phosphorylase (316 aa).

Residues His-143 and Lys-164 contribute to the active site. An ATP-binding site is contributed by 158-165 (GEAGSGKS). Residue Ser-165 participates in Mg(2+) binding. Catalysis depends on Asp-182, which acts as the Proton acceptor; for phosphorylation activity. Proton donor; for dephosphorylation activity. The tract at residues 206–215 (LEVRGLGVLN) is important for the catalytic mechanism of both phosphorylation and dephosphorylation. Glu-207 is a binding site for Mg(2+). Residue Arg-251 is part of the active site. The segment at 272–277 (PVMPGR) is important for the catalytic mechanism of dephosphorylation.

Belongs to the HPrK/P family. Homohexamer. Mg(2+) is required as a cofactor.

It catalyses the reaction [HPr protein]-L-serine + ATP = [HPr protein]-O-phospho-L-serine + ADP + H(+). The enzyme catalyses [HPr protein]-O-phospho-L-serine + phosphate + H(+) = [HPr protein]-L-serine + diphosphate. In terms of biological role, catalyzes the ATP- as well as the pyrophosphate-dependent phosphorylation of a specific serine residue in HPr, a phosphocarrier protein of the phosphoenolpyruvate-dependent sugar phosphotransferase system (PTS). HprK/P also catalyzes the pyrophosphate-producing, inorganic phosphate-dependent dephosphorylation (phosphorolysis) of seryl-phosphorylated HPr (P-Ser-HPr). The chain is HPr kinase/phosphorylase from Xanthomonas axonopodis pv. citri (strain 306).